Reading from the N-terminus, the 140-residue chain is ATP synthase epsilon chain (140 aa).

Belongs to the ATPase epsilon chain family. As to quaternary structure, F-type ATPases have 2 components, CF(1) - the catalytic core - and CF(0) - the membrane proton channel. CF(1) has five subunits: alpha(3), beta(3), gamma(1), delta(1), epsilon(1). CF(0) has three main subunits: a, b and c.

The protein localises to the cell inner membrane. Functionally, produces ATP from ADP in the presence of a proton gradient across the membrane. In Xanthomonas campestris pv. campestris (strain 8004), this protein is ATP synthase epsilon chain.